The sequence spans 269 residues: Monofunctional glycosyltransferase (269 aa).

Residues 46 to 66 (ILLTILIIIALFIGIMYFLST) form a helical membrane-spanning segment.

The protein belongs to the glycosyltransferase 51 family.

The protein resides in the cell membrane. The catalysed reaction is [GlcNAc-(1-&gt;4)-Mur2Ac(oyl-L-Ala-gamma-D-Glu-L-Lys-D-Ala-D-Ala)](n)-di-trans,octa-cis-undecaprenyl diphosphate + beta-D-GlcNAc-(1-&gt;4)-Mur2Ac(oyl-L-Ala-gamma-D-Glu-L-Lys-D-Ala-D-Ala)-di-trans,octa-cis-undecaprenyl diphosphate = [GlcNAc-(1-&gt;4)-Mur2Ac(oyl-L-Ala-gamma-D-Glu-L-Lys-D-Ala-D-Ala)](n+1)-di-trans,octa-cis-undecaprenyl diphosphate + di-trans,octa-cis-undecaprenyl diphosphate + H(+). Its pathway is cell wall biogenesis; peptidoglycan biosynthesis. In terms of biological role, peptidoglycan polymerase that catalyzes glycan chain elongation using lipid-linked disaccharide-pentapeptide as the substrate. This is Monofunctional glycosyltransferase from Staphylococcus aureus (strain JH1).